The chain runs to 224 residues: Small ribosomal subunit protein eS1 (224 aa).

This sequence belongs to the eukaryotic ribosomal protein eS1 family.

The sequence is that of Small ribosomal subunit protein eS1 from Methanococcus maripaludis (strain C7 / ATCC BAA-1331).